The sequence spans 782 residues: Calcium-independent phospholipase A2-gamma (782 aa).

N4 carries N-linked (GlcNAc...) asparagine glycosylation. Disordered stretches follow at residues 219–275 and 317–343; these read EKMS…PSAI and SKSQ…AEEK. Positions 220 to 248 are enriched in basic and acidic residues; the sequence is KMSQQKENEHFRDKSELEDKKVEEGKLRS. N361 carries an N-linked (GlcNAc...) asparagine glycan. Residues 445-640 form the PNPLA domain; it reads LSIDGGGTRG…LLNNPSALAM (196 aa). The GXGXXG motif lies at 449 to 454; it reads GGGTRG. The helical transmembrane segment at 475–495 threads the bilayer; it reads LFDYICGVSTGAILAFMLGLF. The GXSXG motif lies at 481–485; sequence GVSTG. Catalysis depends on S483, which acts as the Nucleophile. Catalysis depends on D627, which acts as the Proton acceptor. The short motif at 627–629 is the DGA/G element; it reads DGG. K736 is subject to N6-succinyllysine.

As to expression, expressed in parenchymal tissues including heart, skeletal muscle, placenta, brain, liver and pancreas. Also expressed in bronchial epithelial cells and kidney. Highest expression is observed in skeletal muscle and heart.

It localises to the endoplasmic reticulum membrane. The protein resides in the mitochondrion membrane. Its subcellular location is the peroxisome membrane. It catalyses the reaction a 1,2-diacyl-sn-glycero-3-phosphocholine + H2O = a 1-acyl-sn-glycero-3-phosphocholine + a fatty acid + H(+). It carries out the reaction a 1,2-diacyl-sn-glycero-3-phosphocholine + H2O = a 2-acyl-sn-glycero-3-phosphocholine + a fatty acid + H(+). The enzyme catalyses a 1,2-diacyl-sn-glycero-3-phosphoethanolamine + H2O = a 1-acyl-sn-glycero-3-phosphoethanolamine + a fatty acid + H(+). The catalysed reaction is a 1-O-(1Z-alkenyl)-2-acyl-sn-glycero-3-phosphocholine + H2O = a 1-O-(1Z-alkenyl)-sn-glycero-3-phosphocholine + a fatty acid + H(+). It catalyses the reaction a 1-acyl-sn-glycero-3-phosphocholine + H2O = sn-glycerol 3-phosphocholine + a fatty acid + H(+). It carries out the reaction 1-acyl-2-(9Z,12Z)-octadecadienoyl-sn-glycero-3-phosphocholine + H2O = a 1-acyl-sn-glycero-3-phosphocholine + (9Z,12Z)-octadecadienoate + H(+). The enzyme catalyses 1-acyl-2-(5Z,8Z,11Z,14Z-eicosatetraenoyl)-sn-glycero-3-phosphocholine + H2O = a 1-acyl-sn-glycero-3-phosphocholine + (5Z,8Z,11Z,14Z)-eicosatetraenoate + H(+). The catalysed reaction is 1-hexadecanoyl-2-(5Z,8Z,11Z,14Z-eicosatetraenoyl)-sn-glycero-3-phosphocholine + H2O = 1-hexadecanoyl-sn-glycero-3-phosphocholine + (5Z,8Z,11Z,14Z)-eicosatetraenoate + H(+). It catalyses the reaction 1-octadecanoyl-2-(9Z-octadecenoyl)-sn-glycero-3-phosphocholine + H2O = 1-octadecanoyl-sn-glycero-3-phosphocholine + (9Z)-octadecenoate + H(+). It carries out the reaction 1-hexadecanoyl-2-(9Z-octadecenoyl)-sn-glycero-3-phosphocholine + H2O = 1-hexadecanoyl-sn-glycero-3-phosphocholine + (9Z)-octadecenoate + H(+). The enzyme catalyses 1-hexadecanoyl-2-(9Z,12Z-octadecadienoyl)-sn-glycero-3-phosphocholine + H2O = (9Z,12Z)-octadecadienoate + 1-hexadecanoyl-sn-glycero-3-phosphocholine + H(+). The catalysed reaction is 1-acyl-2-(9Z,12Z)-octadecadienoyl-sn-glycero-3-phosphoethanolamine + H2O = a 1-acyl-sn-glycero-3-phosphoethanolamine + (9Z,12Z)-octadecadienoate + H(+). It catalyses the reaction 1-acyl-2-(5Z,8Z,11Z,14Z)-eicosatetraenoyl-sn-glycero-3-phosphoethanolamine + H2O = a 1-acyl-sn-glycero-3-phosphoethanolamine + (5Z,8Z,11Z,14Z)-eicosatetraenoate + H(+). It carries out the reaction 1-hexadecanoyl-2-(5Z,8Z,11Z,14Z-eicosatetraenoyl)-sn-glycero-3-phosphoethanolamine + H2O = 1-hexadecanoyl-sn-glycero-3-phosphoethanolamine + (5Z,8Z,11Z,14Z)-eicosatetraenoate + H(+). The enzyme catalyses 1-hexadecanoyl-2-(5Z,8Z,11Z,14Z-eicosatetraenoyl)-sn-glycero-3-phosphocholine + H2O = 2-(5Z,8Z,11Z,14Z)-eicosatetraenoyl-sn-glycero-3-phosphocholine + hexadecanoate + H(+). The catalysed reaction is 1-octadecanoyl-2-(9Z-octadecenoyl)-sn-glycero-3-phosphocholine + H2O = 2-(9Z-octadecenoyl)-sn-glycero-3-phosphocholine + octadecanoate + H(+). It catalyses the reaction 1-hexadecanoyl-2-(4Z,7Z,10Z,13Z,16Z,19Z-docosahexaenoyl)-sn-glycero-3-phosphocholine + H2O = 2-(4Z,7Z,10Z,13Z,16Z,19Z-docosahexaenoyl)-sn-glycero-3-phosphocholine + hexadecanoate + H(+). It carries out the reaction 1-O-(1Z)-hexadecenyl-2 (5Z,8Z,11Z,14Z)-eicosatetraenoyl-sn-glycero-3-phosphocholine + H2O = 1-(1Z-hexadecenyl)-sn-glycero-3-phosphocholine + (5Z,8Z,11Z,14Z)-eicosatetraenoate + H(+). The enzyme catalyses 1-O-(1Z-hexadecenyl)-2-(9Z-octadecenoyl)-sn-glycero-3-phosphocholine + H2O = 1-(1Z-hexadecenyl)-sn-glycero-3-phosphocholine + (9Z)-octadecenoate + H(+). The catalysed reaction is 1-hexadecanoyl-sn-glycero-3-phosphocholine + H2O = sn-glycerol 3-phosphocholine + hexadecanoate + H(+). It catalyses the reaction 1',3'-bis-[1,2-di-(9Z,12Z-octadecadienoyl)-sn-glycero-3-phospho]-glycerol + H2O = 1'-[1,2-di-(9Z,12Z-octadecadienoyl)-sn-glycero-3-phospho]-3'-[1-(9Z,12Z-octadecadienoyl)-sn-glycero-3-phospho]-glycerol + (9Z,12Z)-octadecadienoate + H(+). It carries out the reaction 1'-[1-acyl-2-(9-hydroxy-(10E,12Z)-octadecadienoyl)-sn-glycero-3-phospho]-3'-[1,2-diacyl-sn-glycero-3-phospho]-glycerol + H2O = 9-hydroxy-(10E,12Z)-octadecadienoate + 1'-[1,2-diacyl-sn-glycero-3-phospho],3'-[1-acyl-sn-glycero-3-phospho]-glycerol + H(+). It participates in phospholipid metabolism. Its activity is regulated as follows. Calcium-independent phospholipase. Inhibited by (E)-6-bromomethylene-3-1-naphthalenyl-2H-tetrahydropyran-2-one (BEL). The activity toward 1-hexadecanoyl-2-(5Z,8Z,11Z,14Z-eicosatetraenoyl)-sn-glycero-3-phosphocholine is stimulated by cardiolipin. In terms of biological role, calcium-independent and membrane-bound phospholipase, that catalyzes the esterolytic cleavage of fatty acids from glycerophospholipids to yield free fatty acids and lysophospholipids, hence regulating membrane physical properties and the release of lipid second messengers and growth factors. Hydrolyzes phosphatidylethanolamine, phosphatidylcholine and probably phosphatidylinositol with a possible preference for the former. Also has a broad substrate specificity in terms of fatty acid moieties, hydrolyzing saturated and mono-unsaturated fatty acids at nearly equal rates from either the sn-1 or sn-2 position in diacyl phosphatidylcholine. However, has a weak activity toward polyunsaturated fatty acids at the sn-2 position, and thereby favors the production of 2-arachidonoyl lysophosphatidylcholine, a key branch point metabolite in eicosanoid signaling. On the other hand, can produce arachidonic acid from the sn-1 position of diacyl phospholipid and from the sn-2 position of arachidonate-containing plasmalogen substrates. Therefore, plays an important role in the mobilization of arachidonic acid in response to cellular stimuli and the generation of lipid second messengers. Can also hydrolyze lysophosphatidylcholine. In the mitochondrial compartment, catalyzes the hydrolysis and release of oxidized aliphatic chains from cardiolipin and integrates mitochondrial bioenergetics and signaling. It is essential for maintaining efficient bioenergetic mitochondrial function through tailoring mitochondrial membrane lipid metabolism and composition. In Homo sapiens (Human), this protein is Calcium-independent phospholipase A2-gamma.